Here is a 447-residue protein sequence, read N- to C-terminus: ATP-dependent protease ATPase subunit HslU (447 aa).

Residues isoleucine 18, 60–65 (GVGKTE), aspartate 259, glutamate 325, and arginine 397 each bind ATP.

The protein belongs to the ClpX chaperone family. HslU subfamily. As to quaternary structure, a double ring-shaped homohexamer of HslV is capped on each side by a ring-shaped HslU homohexamer. The assembly of the HslU/HslV complex is dependent on binding of ATP.

It localises to the cytoplasm. Its function is as follows. ATPase subunit of a proteasome-like degradation complex; this subunit has chaperone activity. The binding of ATP and its subsequent hydrolysis by HslU are essential for unfolding of protein substrates subsequently hydrolyzed by HslV. HslU recognizes the N-terminal part of its protein substrates and unfolds these before they are guided to HslV for hydrolysis. The polypeptide is ATP-dependent protease ATPase subunit HslU (Burkholderia lata (strain ATCC 17760 / DSM 23089 / LMG 22485 / NCIMB 9086 / R18194 / 383)).